The primary structure comprises 438 residues: EF-hand calcium-binding domain-containing protein 3 (438 aa).

2 EF-hand domains span residues 47–82 and 83–118; these read SQMAAFQDAYNFFYKDKTGCIDFHGLMCTVAKLGMN and LTKHDVYNELKCADIDRDGKVNFSDFIKVLTDKNLF. Residues Asp-96, Asp-98, Asp-100, Lys-102, and Asp-107 each contribute to the Ca(2+) site. Tyr-279 is modified (phosphotyrosine). The segment covering 405–415 has biased composition (low complexity); that stretch reads SSHNSRSSSSS. The disordered stretch occupies residues 405–438; it reads SSHNSRSSSSSDTSECYTDSGRKRKRKGLKGFQQ. The segment covering 426–438 has biased composition (basic residues); it reads RKRKRKGLKGFQQ.

The polypeptide is EF-hand calcium-binding domain-containing protein 3 (EFCAB3) (Homo sapiens (Human)).